The sequence spans 132 residues: Small ribosomal subunit protein uS8 (132 aa).

The protein belongs to the universal ribosomal protein uS8 family. Part of the 30S ribosomal subunit. Contacts proteins S5 and S12.

Functionally, one of the primary rRNA binding proteins, it binds directly to 16S rRNA central domain where it helps coordinate assembly of the platform of the 30S subunit. The protein is Small ribosomal subunit protein uS8 of Clostridium botulinum (strain 657 / Type Ba4).